Consider the following 278-residue polypeptide: Large ribosomal subunit protein uL2 (278 aa).

Over residues 212 to 221 (NRWLGKRPHN) the composition is skewed to basic residues. The interval 212-278 (NRWLGKRPHN…ILSSRHNRKK (67 aa)) is disordered.

It belongs to the universal ribosomal protein uL2 family. Part of the 50S ribosomal subunit. Forms a bridge to the 30S subunit in the 70S ribosome.

One of the primary rRNA binding proteins. Required for association of the 30S and 50S subunits to form the 70S ribosome, for tRNA binding and peptide bond formation. It has been suggested to have peptidyltransferase activity; this is somewhat controversial. Makes several contacts with the 16S rRNA in the 70S ribosome. The sequence is that of Large ribosomal subunit protein uL2 from Methylorubrum populi (strain ATCC BAA-705 / NCIMB 13946 / BJ001) (Methylobacterium populi).